The sequence spans 600 residues: MLRSLLLRRSNARSLRPPFPPLRTLCTSGQTLTPAPPPPPPPPPPISSSASEKEFRKYAGYAALALFSGAATYFSFPFPENAKHKKAQIFRYAPLPEDLHTVSNWSGTHEVQTRNFNQPETLADLEALVKEAHEKKNRIRPVGSGLSPNGIGLSRSGMVNLALMDKVLEVDKEKKRVRVQAGIRVQQLVDAIQEYGLTLQNFASIREQQIGGIIQVGAHGTGARLPPIDEQVIGMKLVTPAKGTIELSKDNDPELFHLARCGLGGLGVVAEVTLQCVERQELLEHTYVSTLEEIKKNHKKLLSTNKHVKYLYIPYTDTVVVVTCNPVSKWSGAPKDKPKYTTEEALKHVRDLYRESIVKYRVQDSSKKTPDSREPDINELSFTELRDKLIALDPLNDVHVGKVNQAEAEFWKKSEGYRVGWSDEILGFDCGGQQWVSETCFPAGTLAKPSMKDLEYIEQLKELIQKEAIPAPSPIEQRWTGRSKSPMSPAFSTAEEDIFSWVGIIMYLPTADPRQRKDITDEFFHYRHLTQAKLWDQYSAYEHWAKIEIPKDKEELEALQERLRKRFPVDAYNKARRELDPNRILSNNMVEKLFPVSKTA.

A mitochondrion-targeting transit peptide spans 1 to 25 (MLRSLLLRRSNARSLRPPFPPLRTL). Positions 16–51 (RPPFPPLRTLCTSGQTLTPAPPPPPPPPPPISSSAS) are disordered. Positions 26 to 91 (CTSGQTLTPA…AKHKKAQIFR (66 aa)) are cleaved as a propeptide — removed in mature form. Positions 34-46 (PAPPPPPPPPPPI) are enriched in pro residues. The chain crosses the membrane as a helical span at residues 58-74 (YAGYAALALFSGAATYF). The region spanning 108-279 (THEVQTRNFN…AEVTLQCVER (172 aa)) is the FAD-binding PCMH-type domain.

It depends on FAD as a cofactor.

It is found in the mitochondrion membrane. The catalysed reaction is L-galactono-1,4-lactone + 4 Fe(III)-[cytochrome c] = L-dehydroascorbate + 4 Fe(II)-[cytochrome c] + 5 H(+). The protein operates within cofactor biosynthesis; L-ascorbate biosynthesis. With respect to regulation, inhibited by sulfhydryl-modifying agents such as N-ethylmaleimide, monoiodoacetic acid and p-hydroxymercuribenzoic acid. No inhibition by riboflavin and lycorine. Its function is as follows. Involved in the biosynthesis of ascorbic acid. Uses L-galactono-1,4-lactone as substrate, but not L-gulono-1,4-lactone, D-galactono-1,4-lactone, D-gulono-1,4-lactone, D-erythronic-1,4-lactone, D-xylonic-1,4-lactone, L-mannono-1,4-lactone, D-galactonic acid, D-glucuronic acid or D-gluconic acid. FAD, NAD, NADP and O(2) cannot act as electron acceptor. This chain is L-galactono-1,4-lactone dehydrogenase, mitochondrial, found in Brassica oleracea (Wild cabbage).